Reading from the N-terminus, the 445-residue chain is MATAASNHYSLLTSSASIVHAEPPGGMQQGAGGYREAQSLVQGDYGALQSNGHPLSHAHQWITALSHGGGGGGGGGGGGGGGGGGGGGDGSPWSTSPLGQPDIKPSVVVQQGGRGDELHGPGALQQQHQQQQQQQQQQQQQQQQQQQQQQQRPPHLVHHAANHHPGPGAWRSAAAAAHLPPSMGASNGGLLYSQPSFTVNGMLGAGGQPAGLHHHGLRDAHDEPHHADHHPHPHSHPHQQPPPPPPPQGPPGHPGAHHDPHSDEDTPTSDDLEQFAKQFKQRRIKLGFTQADVGLALGTLYGNVFSQTTICRFEALQLSFKNMCKLKPLLNKWLEEADSSSGSPTSIDKIAAQGRKRKKRTSIEVSVKGALESHFLKCPKPSAQEITSLADSLQLEKEVVRVWFCNRRQKEKRMTPPGGTLPGAEDVYGGSRDTPPHHGVQTPVQ.

Disordered stretches follow at residues 64-173 (ALSH…WRSA) and 203-269 (LGAG…TPTS). Over residues 67–90 (HGGGGGGGGGGGGGGGGGGGGGDG) the composition is skewed to gly residues. Composition is skewed to low complexity over residues 125-151 (QQQH…QQQQ) and 163-173 (HHPGPGAWRSA). Over residues 217 to 226 (LRDAHDEPHH) the composition is skewed to basic and acidic residues. Over residues 227–237 (ADHHPHPHSHP) the composition is skewed to basic residues. A compositionally biased stretch (pro residues) spans 239–253 (QQPPPPPPPQGPPGH). The region spanning 264–338 (EDTPTSDDLE…LLNKWLEEAD (75 aa)) is the POU-specific domain. Residue Ser-343 is modified to Phosphoserine. Residues 356–415 (KRKKRTSIEVSVKGALESHFLKCPKPSAQEITSLADSLQLEKEVVRVWFCNRRQKEKRMT) constitute a DNA-binding region (homeobox). The segment at 411-445 (EKRMTPPGGTLPGAEDVYGGSRDTPPHHGVQTPVQ) is disordered.

The protein belongs to the POU transcription factor family. Class-3 subfamily. Interacts with PQBP1. Interaction with ISL1. As to expression, expressed specifically in the neuroectodermal cell lineage.

The protein resides in the nucleus. In terms of biological role, transcription factor that plays a key role in neuronal differentiation. Binds preferentially to the recognition sequence which consists of two distinct half-sites, ('GCAT') and ('TAAT'), separated by a non-conserved spacer region of 0, 2, or 3 nucleotides. Acts as a transcriptional activator when binding cooperatively with SOX4, SOX11, or SOX12 to gene promoters. The combination of three transcription factors, ASCL1, POU3F2/BRN2 and MYT1L, is sufficient to reprogram fibroblasts and other somatic cells into induced neuronal (iN) cells in vitro. Acts downstream of ASCL1, accessing chromatin that has been opened by ASCL1, and promotes transcription of neuronal genes. The polypeptide is POU domain, class 3, transcription factor 2 (Pou3f2) (Mus musculus (Mouse)).